We begin with the raw amino-acid sequence, 1070 residues long: DNA-directed RNA polymerase subunit beta (1070 aa).

It belongs to the RNA polymerase beta chain family. In terms of assembly, in plastids the minimal PEP RNA polymerase catalytic core is composed of four subunits: alpha, beta, beta', and beta''. When a (nuclear-encoded) sigma factor is associated with the core the holoenzyme is formed, which can initiate transcription.

It localises to the plastid. Its subcellular location is the chloroplast. The enzyme catalyses RNA(n) + a ribonucleoside 5'-triphosphate = RNA(n+1) + diphosphate. Its function is as follows. DNA-dependent RNA polymerase catalyzes the transcription of DNA into RNA using the four ribonucleoside triphosphates as substrates. In Citrus sinensis (Sweet orange), this protein is DNA-directed RNA polymerase subunit beta.